We begin with the raw amino-acid sequence, 60 residues long: Cytochrome c oxidase subunit 9, mitochondrial (60 aa).

Residues 1–15 (MSALAPITGTLKKRI) lie on the Mitochondrial matrix side of the membrane. Residues 16–38 (ITDIVIGFSLGGVMASYWWWGFH) traverse the membrane as a helical segment. The Mitochondrial intermembrane segment spans residues 39–57 (KNVIDRREAFYADLAEKKK). The propeptide at 58–60 (AEN) is removed in mature form.

This sequence belongs to the fungal cytochrome c oxidase subunit 7a family. As to quaternary structure, component of the cytochrome c oxidase (complex IV, CIV), a multisubunit enzyme composed of a catalytic core of 3 subunits and several supernumerary subunits. The complex exists as a monomer or a dimer and forms supercomplexes (SCs) in the inner mitochondrial membrane with ubiquinol-cytochrome c oxidoreductase (cytochrome b-c1 complex, complex III, CIII).

The protein localises to the mitochondrion inner membrane. It participates in energy metabolism; oxidative phosphorylation. In terms of biological role, component of the cytochrome c oxidase, the last enzyme in the mitochondrial electron transport chain which drives oxidative phosphorylation. The respiratory chain contains 3 multisubunit complexes succinate dehydrogenase (complex II, CII), ubiquinol-cytochrome c oxidoreductase (cytochrome b-c1 complex, complex III, CIII) and cytochrome c oxidase (complex IV, CIV), that cooperate to transfer electrons derived from NADH and succinate to molecular oxygen, creating an electrochemical gradient over the inner membrane that drives transmembrane transport and the ATP synthase. Cytochrome c oxidase is the component of the respiratory chain that catalyzes the reduction of oxygen to water. Electrons originating from reduced cytochrome c in the intermembrane space (IMS) are transferred via the dinuclear copper A center (CU(A)) of subunit 2 and heme A of subunit 1 to the active site in subunit 1, a binuclear center (BNC) formed by heme A3 and copper B (CU(B)). The BNC reduces molecular oxygen to 2 water molecules using 4 electrons from cytochrome c in the IMS and 4 protons from the mitochondrial matrix. The sequence is that of Cytochrome c oxidase subunit 9, mitochondrial (COX9) from Candida glabrata (strain ATCC 2001 / BCRC 20586 / JCM 3761 / NBRC 0622 / NRRL Y-65 / CBS 138) (Yeast).